The following is a 617-amino-acid chain: Proline--tRNA ligase (617 aa).

The protein belongs to the class-II aminoacyl-tRNA synthetase family. ProS type 1 subfamily. Homodimer.

It localises to the cytoplasm. It catalyses the reaction tRNA(Pro) + L-proline + ATP = L-prolyl-tRNA(Pro) + AMP + diphosphate. Functionally, catalyzes the attachment of proline to tRNA(Pro) in a two-step reaction: proline is first activated by ATP to form Pro-AMP and then transferred to the acceptor end of tRNA(Pro). As ProRS can inadvertently accommodate and process non-cognate amino acids such as alanine and cysteine, to avoid such errors it has two additional distinct editing activities against alanine. One activity is designated as 'pretransfer' editing and involves the tRNA(Pro)-independent hydrolysis of activated Ala-AMP. The other activity is designated 'posttransfer' editing and involves deacylation of mischarged Ala-tRNA(Pro). The misacylated Cys-tRNA(Pro) is not edited by ProRS. This Streptococcus agalactiae serotype Ia (strain ATCC 27591 / A909 / CDC SS700) protein is Proline--tRNA ligase.